A 79-amino-acid chain; its full sequence is Cell division protein ZapB (79 aa).

Positions 6-78 (FEKLEVKVQQ…LRALLGKMEE (73 aa)) form a coiled coil.

This sequence belongs to the ZapB family. Homodimer. The ends of the coiled-coil dimer bind to each other, forming polymers. Interacts with FtsZ.

The protein resides in the cytoplasm. Non-essential, abundant cell division factor that is required for proper Z-ring formation. It is recruited early to the divisome by direct interaction with FtsZ, stimulating Z-ring assembly and thereby promoting cell division earlier in the cell cycle. Its recruitment to the Z-ring requires functional FtsA or ZipA. The chain is Cell division protein ZapB from Yersinia pseudotuberculosis serotype O:1b (strain IP 31758).